We begin with the raw amino-acid sequence, 211 residues long: Thiamine-phosphate synthase (211 aa).

Residues 43–47 and N75 contribute to the 4-amino-2-methyl-5-(diphosphooxymethyl)pyrimidine site; that span reads QLRDK. Mg(2+)-binding residues include D76 and D95. Residue S114 participates in 4-amino-2-methyl-5-(diphosphooxymethyl)pyrimidine binding. 140–142 is a 2-[(2R,5Z)-2-carboxy-4-methylthiazol-5(2H)-ylidene]ethyl phosphate binding site; sequence TAS. Residue K143 participates in 4-amino-2-methyl-5-(diphosphooxymethyl)pyrimidine binding. 2-[(2R,5Z)-2-carboxy-4-methylthiazol-5(2H)-ylidene]ethyl phosphate-binding positions include G170 and 190 to 191; that span reads IS.

It belongs to the thiamine-phosphate synthase family. It depends on Mg(2+) as a cofactor.

The catalysed reaction is 2-[(2R,5Z)-2-carboxy-4-methylthiazol-5(2H)-ylidene]ethyl phosphate + 4-amino-2-methyl-5-(diphosphooxymethyl)pyrimidine + 2 H(+) = thiamine phosphate + CO2 + diphosphate. It carries out the reaction 2-(2-carboxy-4-methylthiazol-5-yl)ethyl phosphate + 4-amino-2-methyl-5-(diphosphooxymethyl)pyrimidine + 2 H(+) = thiamine phosphate + CO2 + diphosphate. It catalyses the reaction 4-methyl-5-(2-phosphooxyethyl)-thiazole + 4-amino-2-methyl-5-(diphosphooxymethyl)pyrimidine + H(+) = thiamine phosphate + diphosphate. The protein operates within cofactor biosynthesis; thiamine diphosphate biosynthesis; thiamine phosphate from 4-amino-2-methyl-5-diphosphomethylpyrimidine and 4-methyl-5-(2-phosphoethyl)-thiazole: step 1/1. In terms of biological role, condenses 4-methyl-5-(beta-hydroxyethyl)thiazole monophosphate (THZ-P) and 2-methyl-4-amino-5-hydroxymethyl pyrimidine pyrophosphate (HMP-PP) to form thiamine monophosphate (TMP). The chain is Thiamine-phosphate synthase from Coprothermobacter proteolyticus (strain ATCC 35245 / DSM 5265 / OCM 4 / BT).